Here is a 267-residue protein sequence, read N- to C-terminus: Putative hydro-lyase RALTA_B1245 (267 aa).

Belongs to the D-glutamate cyclase family.

This Cupriavidus taiwanensis (strain DSM 17343 / BCRC 17206 / CCUG 44338 / CIP 107171 / LMG 19424 / R1) (Ralstonia taiwanensis (strain LMG 19424)) protein is Putative hydro-lyase RALTA_B1245.